The following is an 863-amino-acid chain: Linoleate 9S-lipoxygenase 1 (863 aa).

One can recognise a PLAT domain in the interval 32-158 (RDFTASLLDN…KYHYNRIFFA (127 aa)). The 703-residue stretch at 161–863 (SYLPSQMPEA…ARGIPNSISI (703 aa)) folds into the Lipoxygenase domain. The segment at 204 to 244 (NDLGEPDRDNPRPVLGGSQKHPYPRRGRTGRIPTKKDPNSE) is disordered. Fe cation is bound by residues His518, His523, His709, Asn713, and Ile863.

This sequence belongs to the lipoxygenase family. As to quaternary structure, monomer. It depends on Fe cation as a cofactor.

The protein localises to the cytoplasm. It catalyses the reaction (9Z,12Z)-octadecadienoate + O2 = (9S)-hydroperoxy-(10E,12Z)-octadecadienoate. It functions in the pathway lipid metabolism; oxylipin biosynthesis. Plant lipoxygenase may be involved in a number of diverse aspects of plant physiology including growth and development, pest resistance, and senescence or responses to wounding. This lipoxygenase introduces molecular oxygen exclusively into the C-9 position of linoleic and linolenic. This is Linoleate 9S-lipoxygenase 1 from Oryza sativa subsp. japonica (Rice).